A 107-amino-acid polypeptide reads, in one-letter code: Anti-adapter protein IraM (107 aa).

This sequence belongs to the IraM/RssC family.

It localises to the cytoplasm. Its function is as follows. Inhibits RpoS proteolysis by regulating RssB activity, thereby increasing the stability of the sigma stress factor RpoS during magnesium starvation. This chain is Anti-adapter protein IraM, found in Shigella dysenteriae serotype 1 (strain Sd197).